Consider the following 287-residue polypeptide: METTKKLSPIFCFSSLLCLFFTMNQAVSETDHMDTFCIDSSRNTTGNTTYNKNLNTMLSTFRNQSSIVNNYNLTTGLASDTVYGMFLCTGDVNITTCNNCVKNATIEIVKNCTNHREAIIYYIDCMVRYSDKFFLSTFEKKPNSIWSGDDPIPKSLGPFKKRLYKKMGEAIVRSSTLSSALTPYYYLDVTRFDGSYDLDSLVQCSPHLNPENCTICLEYALQEIIDCCSDKFWAMIFTPNCFVNYMITTSPLPPLPSPYHHSGSCSIRGNSEIFWGMIILAALVFTF.

The first 26 residues, 1–26 (METTKKLSPIFCFSSLLCLFFTMNQA), serve as a signal peptide directing secretion. Gnk2-homologous domains are found at residues 32-134 (HMDT…DKFF) and 140-250 (KKPN…ITTS). N43, N47, N63, N72, N93, N103, N111, and N212 each carry an N-linked (GlcNAc...) asparagine glycan.

This sequence belongs to the cysteine-rich repeat secretory protein family.

It is found in the secreted. The protein is Cysteine-rich repeat secretory protein 59 (CRRSP59) of Arabidopsis thaliana (Mouse-ear cress).